The following is a 266-amino-acid chain: Apoptosis regulator ced-9 (266 aa).

Residues 1–58 are disordered; sequence MVDSMDMANSSQNTFRRRTMATSEMREFLSTKDAEPNNFGMQTIPESPTPSTPTRRMS. Over residues 24-35 the composition is skewed to basic and acidic residues; the sequence is EMREFLSTKDAE. Residues 75–94 carry the BH4 motif; that stretch reads IQGFVVDYFTYRIAQNGLDW. A BH1 motif is present at residues 156–174; it reads NTPCPMSYGRLIGLISFGG. Positions 208–223 match the BH2 motif; the sequence is SWKEHNRSWADFMKLG.

It belongs to the Bcl-2 family. Interacts with asymmetric homodimer ced-4; the interaction sequesters ced-4. Interacts with egl-1; the interaction results in ced-4 release. Interacts with dre-1; the interaction inhibits ced-9 activity, either directly or indirectly. Interacts with dct-1. May form a complex composed of ced-9, ced-4 and mac-1.

Its subcellular location is the perikaryon. It localises to the synapse. It is found in the endomembrane system. The protein localises to the mitochondrion membrane. Its function is as follows. Plays a major role in programmed cell death (PCD, apoptosis). egl-1 binds to and directly inhibits the activity of ced-9, releasing the cell death activator ced-4 from a ced-9/ced-4 containing protein complex and allowing ced-4 to activate the cell-killing caspase ced-3. During larval development, required for the elimination of transient presynaptic components downstream of egl-1 and upstream of ced-4 and ced-3 apoptotic pathway. This chain is Apoptosis regulator ced-9 (ced-9), found in Caenorhabditis briggsae.